Consider the following 146-residue polypeptide: Large ribosomal subunit protein uL15 (146 aa).

The segment at 1–62 is disordered; sequence MRLHELRPKT…GQMPLQERLP (62 aa). Basic residues predominate over residues 10-21; sequence TNYKKSRKRKGR. Residues 42-52 are compositionally biased toward gly residues; the sequence is TGGGVRPGFEG.

Belongs to the universal ribosomal protein uL15 family. As to quaternary structure, part of the 50S ribosomal subunit.

Its function is as follows. Binds to the 23S rRNA. This chain is Large ribosomal subunit protein uL15, found in Natranaerobius thermophilus (strain ATCC BAA-1301 / DSM 18059 / JW/NM-WN-LF).